The following is a 121-amino-acid chain: Prismalin-14 (121 aa).

An N-terminal signal peptide occupies residues 1 to 16 (MRSLLVLLALAACASA). Residue Gln17 is modified to Pyrrolidone carboxylic acid. Tandem repeats lie at residues 48–51 (PIYR), 52–55 (PIYR), 56–59 (PIYY), and 60–63 (PQII). Positions 48–63 (PIYRPIYRPIYYPQII) are 4 X 4 AA approximate tandem repeats of P-I-Y-R.

As to expression, expressed only at the mantle edge where it is found predominantly in the inner side of the outer mantle fold.

In terms of biological role, displays inhibitory activity against calcium carbonate precipitation, binds calcium and affects crystallization of calcium carbonate in vitro. May be involved in calcification of the prismatic layer of the shell. The chain is Prismalin-14 from Pinctada fucata (Akoya pearl oyster).